We begin with the raw amino-acid sequence, 479 residues long: UPF0164 protein TP_0865 (479 aa).

An N-terminal signal peptide occupies residues 1 to 49 (MVRMRRRRACSSGGACGCAAVRGARSFLSVRVLGMRIGMSALCLAPLFA).

This sequence belongs to the UPF0164 family.

The polypeptide is UPF0164 protein TP_0865 (Treponema pallidum (strain Nichols)).